A 4076-amino-acid polypeptide reads, in one-letter code: E3 ubiquitin-protein ligase TOM1-like (4076 aa).

Residues 225 to 237 (SSAAPAVSAGSTA) show a composition bias toward low complexity. 17 disordered regions span residues 225–256 (SSAA…KNVA), 288–360 (YPDT…RDGP), 748–819 (IPAE…ILPS), 921–970 (LEAP…NKPA), 1083–1103 (SPVQ…SSGT), 1571–1646 (MALD…ITRE), 1988–2041 (PADA…KRPI), 2067–2110 (NVPA…KLAK), 2275–2295 (EGDK…IGRS), 2356–2551 (SGTA…ELDY), 2581–2634 (GDDL…LLAP), 2782–2817 (IPIP…ESTH), 2858–2955 (EKAR…QAED), 3037–3066 (EQHE…ASIL), 3105–3132 (RQLH…GAGT), 3216–3241 (KQLK…NNNG), and 3353–3444 (EEQA…QLTP). Over residues 238 to 250 (KAKDKEKEKEKAT) the composition is skewed to basic and acidic residues. The span at 311–320 (TTSSPAAPTP) shows a compositional bias: low complexity. A compositionally biased stretch (polar residues) spans 322 to 343 (RRSSTMNVSQSSRTQRVGSSEE). Over residues 767-778 (EGNDADDDSEDD) the composition is skewed to acidic residues. Residues 940–950 (VKGKGKEKATD) show a composition bias toward basic and acidic residues. The span at 959–969 (ASSSSSGNNKP) shows a compositional bias: polar residues. The span at 1606-1620 (PGTSRETNVGASTTA) shows a compositional bias: polar residues. Over residues 1621 to 1632 (PQQLPVLPSQQP) the composition is skewed to low complexity. The span at 1633–1642 (ATESQSNTPR) shows a compositional bias: polar residues. Over residues 2021–2041 (VTDKDMHDAPKNPAQDLKRPI) the composition is skewed to basic and acidic residues. Over residues 2086 to 2096 (NEATPSPSGDE) the composition is skewed to polar residues. Basic and acidic residues predominate over residues 2099–2110 (SESKEKEKKLAK). 2 stretches are compositionally biased toward acidic residues: residues 2378–2387 (DLTDDREETP) and 2405–2450 (EFSD…DLGE). A compositionally biased stretch (low complexity) spans 2460 to 2469 (QPGVVEVLMG). Acidic residues-rich tracts occupy residues 2470–2516 (ENDD…DLED) and 2523–2551 (EEGN…ELDY). Over residues 2587–2597 (EPIRDFDGHYI) the composition is skewed to basic and acidic residues. Acidic residues predominate over residues 2598-2622 (DDDEDGEEDDDEDEGEDDMDDDMYF). Composition is skewed to basic and acidic residues over residues 2788–2803 (HSRE…DTYQ) and 2858–2912 (EKAR…ERAE). Positions 2851 to 2929 (AIQAEKEEKA…QAAADQEANA (79 aa)) form a coiled coil. The span at 2913 to 2927 (AAAQAAAQAAADQEA) shows a compositional bias: low complexity. A compositionally biased stretch (basic and acidic residues) spans 3037–3047 (EQHEQRRRERQ). Residues 3108–3117 (HAQQGGQAAS) show a composition bias toward polar residues. A coiled-coil region spans residues 3341–3375 (PLQAIERRRKEAEEQAKKKKEAEEKAATEREAANA). Residues 3353–3372 (EEQAKKKKEAEEKAATEREA) show a composition bias toward basic and acidic residues. A compositionally biased stretch (low complexity) spans 3373 to 3414 (ANAPEEQASTSTEQTPAQQEATQQPSESTPAAASGQQPAQQD). The segment covering 3415–3439 (QENKELEAPKEKADEKDVQSDEKKI) has biased composition (basic and acidic residues). The region spanning 3740–4076 (KADELKFGKL…TAGSDYFGFA (337 aa)) is the HECT domain. Cysteine 4043 (glycyl thioester intermediate) is an active-site residue.

The protein belongs to the UPL family. TOM1/PTR1 subfamily.

The protein localises to the nucleus. It catalyses the reaction S-ubiquitinyl-[E2 ubiquitin-conjugating enzyme]-L-cysteine + [acceptor protein]-L-lysine = [E2 ubiquitin-conjugating enzyme]-L-cysteine + N(6)-ubiquitinyl-[acceptor protein]-L-lysine.. The protein operates within protein modification; protein ubiquitination. Functionally, probable ubiquitin ligase protein, which may be involved in mRNA export. E3 ubiquitin ligase proteins mediate ubiquitination and subsequent proteasomal degradation of target proteins. Participates in mRNA export from the nucleus by regulating the transport of hnRNP proteins. This Neurospora crassa (strain ATCC 24698 / 74-OR23-1A / CBS 708.71 / DSM 1257 / FGSC 987) protein is E3 ubiquitin-protein ligase TOM1-like.